A 101-amino-acid chain; its full sequence is NADH-quinone oxidoreductase subunit K (101 aa).

A run of 3 helical transmembrane segments spans residues 4–24 (VGHY…GIFI), 29–49 (IIVI…NLVA), and 65–85 (FVLT…VIYF).

This sequence belongs to the complex I subunit 4L family. In terms of assembly, NDH-1 is composed of 14 different subunits. Subunits NuoA, H, J, K, L, M, N constitute the membrane sector of the complex.

The protein localises to the cell inner membrane. The enzyme catalyses a quinone + NADH + 5 H(+)(in) = a quinol + NAD(+) + 4 H(+)(out). Functionally, NDH-1 shuttles electrons from NADH, via FMN and iron-sulfur (Fe-S) centers, to quinones in the respiratory chain. The immediate electron acceptor for the enzyme in this species is believed to be ubiquinone. Couples the redox reaction to proton translocation (for every two electrons transferred, four hydrogen ions are translocated across the cytoplasmic membrane), and thus conserves the redox energy in a proton gradient. The protein is NADH-quinone oxidoreductase subunit K of Sphingopyxis alaskensis (strain DSM 13593 / LMG 18877 / RB2256) (Sphingomonas alaskensis).